Reading from the N-terminus, the 572-residue chain is Urease subunit alpha (572 aa).

The region spanning 134 to 572 is the Urease domain; that stretch reads GGIDAHVHMI…VSLGQLYFFS (439 aa). The Ni(2+) site is built by H139, H141, and K222. K222 is subject to N6-carboxylysine. H224 is a binding site for substrate. Positions 251 and 277 each coordinate Ni(2+). The Proton donor role is filled by H325. D365 contributes to the Ni(2+) binding site.

The protein belongs to the metallo-dependent hydrolases superfamily. Urease alpha subunit family. Heterotrimer of UreA (gamma), UreB (beta) and UreC (alpha) subunits. Three heterotrimers associate to form the active enzyme. The cofactor is Ni cation. In terms of processing, carboxylation allows a single lysine to coordinate two nickel ions.

It is found in the cytoplasm. The enzyme catalyses urea + 2 H2O + H(+) = hydrogencarbonate + 2 NH4(+). The protein operates within nitrogen metabolism; urea degradation; CO(2) and NH(3) from urea (urease route): step 1/1. This is Urease subunit alpha from Laribacter hongkongensis (strain HLHK9).